A 331-amino-acid polypeptide reads, in one-letter code: MITLNNQDQPVPFNSSHPDEYKIAALVFYSCIFIIGLFVNITALWVFSCTTKKRTTVTIYMMNVALVDLIFIMTLPFRMFYYAKDEWPFGEYFCQILGALTVFYPSIALWLLAFISADRYMAIVQPKYAKELKNTCKAVLACVGVWIMTLTTTTPLLLLYKDPDKDSTPATCLKISDIIYLKAVNVLNLTRLTFFFLIPLFIMIGCYLVIIHNLLHGRTSKLKPKVKEKSIRIIITLLVQVLVCFMPFHICFAFLMLGTGENSYNPWGAFTTFLMNLSTCLDVILYYIVSKQFQARVISVMLYRNYLRSMRRKSFRSGSLRSLSNINSEML.

Residues 1–26 (MITLNNQDQPVPFNSSHPDEYKIAAL) are Extracellular-facing. An N-linked (GlcNAc...) asparagine glycan is attached at asparagine 14. The chain crosses the membrane as a helical span at residues 27–47 (VFYSCIFIIGLFVNITALWVF). Topologically, residues 48-56 (SCTTKKRTT) are cytoplasmic. The helical transmembrane segment at 57-77 (VTIYMMNVALVDLIFIMTLPF) threads the bilayer. Over 78 to 95 (RMFYYAKDEWPFGEYFCQ) the chain is Extracellular. An intrachain disulfide couples cysteine 94 to cysteine 172. Residues 96–116 (ILGALTVFYPSIALWLLAFIS) traverse the membrane as a helical segment. Residues 117-138 (ADRYMAIVQPKYAKELKNTCKA) are Cytoplasmic-facing. A helical transmembrane segment spans residues 139-159 (VLACVGVWIMTLTTTTPLLLL). Over 160–191 (YKDPDKDSTPATCLKISDIIYLKAVNVLNLTR) the chain is Extracellular. Residues 192–212 (LTFFFLIPLFIMIGCYLVIIH) form a helical membrane-spanning segment. Over 213–232 (NLLHGRTSKLKPKVKEKSIR) the chain is Cytoplasmic. A helical transmembrane segment spans residues 233–253 (IIITLLVQVLVCFMPFHICFA). Residues 254–268 (FLMLGTGENSYNPWG) lie on the Extracellular side of the membrane. A helical membrane pass occupies residues 269–289 (AFTTFLMNLSTCLDVILYYIV). Over 290-331 (SKQFQARVISVMLYRNYLRSMRRKSFRSGSLRSLSNINSEML) the chain is Cytoplasmic. Serine 322 carries the phosphoserine modification.

It belongs to the G-protein coupled receptor 1 family. In terms of tissue distribution, expressed in midpiece of spermatozoon (at protein level). Most abundant in testis and spleen. Highly expressed in CD4 and CD8-positive T-cells as well as CD19-positive B-cells.

It is found in the cell membrane. Its subcellular location is the cytoplasmic vesicle membrane. Its function is as follows. G protein-coupled receptor (GPCR) that plays a role in diverse physiological processes particularly within the immune and nervous systems. Becomes active when triggered by various endogenous ligands including endocannabinoid N-arachidonyl glycine (NAGly), delta-9-tetrahydrocannabinol or resolvin D2/RvD2 derived from the omega-3 fatty acid docosahexaenoic acid (DHA). Upon RvD2 binding, facilitates the resolution of inflammation, aiding in tissue repair and homeostasis. Mechanistically, RvD2 ligation initiates Galphas protein coupling, activation of cAMP-PKA signaling pathway and phosphorylation of STAT3, leading to RvD2-stimulated macrophage phagocytosis. Mediates NAGly-induced process of reorganization of actin filaments and induction of acrosomal exocytosis. Activation by N-arachidonoyl glycine (NAGly) can also induce apoptosis in macrophages. Plays a role in homeostasis of CD8+ subsets of intraepithelial lymphocytes (IELs) (CD8alphaalpha and CD8alphabeta IELs) in small intestine by supporting preferential migration of CD8alphaalpha T-cells to intraepithelial compartment over lamina propria compartment, and by mediating their reconstitution into small intestine after bone marrow transplant. Also participates in hypotensive responses, mediating reduction in intraocular and blood pressure. The protein is N-arachidonyl glycine receptor (GPR18) of Homo sapiens (Human).